Reading from the N-terminus, the 138-residue chain is Putative nickel-responsive regulator (138 aa).

Ni(2+)-binding residues include His78, His89, His91, and Cys97.

Belongs to the transcriptional regulatory CopG/NikR family. It depends on Ni(2+) as a cofactor.

Functionally, transcriptional regulator. This chain is Putative nickel-responsive regulator, found in Thermococcus kodakarensis (strain ATCC BAA-918 / JCM 12380 / KOD1) (Pyrococcus kodakaraensis (strain KOD1)).